The following is a 160-amino-acid chain: Protein max (160 aa).

The span at 1–13 (MSDNDDIEVESDE) shows a compositional bias: acidic residues. The tract at residues 1–40 (MSDNDDIEVESDEEQPRFQSAADKRAHHNALERKRRDHIK) is disordered. At Ser2 the chain carries N-acetylserine. 2 positions are modified to phosphoserine: Ser2 and Ser11. Residues 23-74 (DKRAHHNALERKRRDHIKDSFHSLRDSVPSLQGEKASRAQILDKATEYIQYM) form the bHLH domain. Positions 29-40 (NALERKRRDHIK) are enriched in basic and acidic residues. Lys66 carries the N6-acetyllysine modification. Positions 81-102 (HQQDIDDLKRQNALLEQQVRAL) are leucine-zipper. The tract at residues 103-160 (EKARSSAQLQTNYPSSDNSLYTNAKGSTISAFDGGSDSSSESEPEEPQSRKKLRMEAS) is disordered. Ser107 is modified (phosphoserine). Positions 107–132 (SSAQLQTNYPSSDNSLYTNAKGSTIS) are enriched in polar residues. Positions 152–156 (RKKLR) match the Nuclear localization signal motif. Lys153 and Lys154 each carry N6-acetyllysine.

The protein belongs to the MAX family. As to quaternary structure, efficient DNA binding requires dimerization with another bHLH protein. Binds DNA as a heterodimer with MYC or MAD. Part of the E2F6.com-1 complex in G0 phase composed of E2F6, MGA, MAX, TFDP1, CBX3, BAT8, EUHMTASE1, RING1, RNF2, MBLR, L3MBTL2 and YAF2. Component of some MLL1/MLL complex, at least composed of the core components KMT2A/MLL1, ASH2L, HCFC1/HCF1, WDR5 and RBBP5, as well as the facultative components BACC1, CHD8, E2F6, HSP70, INO80C, KANSL1, LAS1L, MAX, MCRS1, MGA, MYST1/MOF, PELP1, PHF20, PRP31, RING2, RUVB1/TIP49A, RUVB2/TIP49B, SENP3, TAF1, TAF4, TAF6, TAF7, TAF9 and TEX10. Interacts with SPAG9. The heterodimer MYC:MAX interacts with ABI1; the interaction may enhance MYC:MAX transcriptional activity. In terms of processing, reversible lysine acetylation might regulate the nuclear-cytoplasmic shuttling of specific Max complexes. As to expression, high levels found in the brain, heart and lung while lower levels are seen in the liver, kidney and skeletal muscle.

It localises to the nucleus. Its subcellular location is the cell projection. The protein localises to the dendrite. In terms of biological role, transcription regulator. Forms a sequence-specific DNA-binding protein complex with MYC or MAD which recognizes the core sequence 5'-CAC[GA]TG-3'. The MYC:MAX complex is a transcriptional activator, whereas the MAD:MAX complex is a repressor. May repress transcription via the recruitment of a chromatin remodeling complex containing H3 'Lys-9' histone methyltransferase activity. Represses MYC transcriptional activity from E-box elements. This chain is Protein max, found in Homo sapiens (Human).